The primary structure comprises 326 residues: tRNA-modifying protein YgfZ (326 aa).

Folate is bound by residues tryptophan 27 and tryptophan 189.

Belongs to the tRNA-modifying YgfZ family.

Its subcellular location is the cytoplasm. Folate-binding protein involved in regulating the level of ATP-DnaA and in the modification of some tRNAs. It is probably a key factor in regulatory networks that act via tRNA modification, such as initiation of chromosomal replication. The polypeptide is tRNA-modifying protein YgfZ (Shigella sonnei (strain Ss046)).